A 131-amino-acid polypeptide reads, in one-letter code: Small ribosomal subunit protein uS12c (131 aa).

It belongs to the universal ribosomal protein uS12 family. Part of the 30S ribosomal subunit.

It localises to the plastid. The protein resides in the chloroplast. Functionally, with S4 and S5 plays an important role in translational accuracy. Located at the interface of the 30S and 50S subunits. The sequence is that of Small ribosomal subunit protein uS12c (rps12) from Stigeoclonium helveticum (Green alga).